Here is a 735-residue protein sequence, read N- to C-terminus: Exocyst complex component 7 (735 aa).

Coiled-coil stretches lie at residues 5–42 (QEAS…TKNM) and 63–85 (VHKQ…SCLD). Ser133 carries the post-translational modification Phosphoserine. A disordered region spans residues 239–268 (HKSSSSSGVPYSPAIPNKRKDTPTKKPVKR).

Belongs to the EXO70 family. As to quaternary structure, the exocyst complex is composed of EXOC1, EXOC2, EXOC3, EXOC4, EXOC5, EXOC6, EXOC7 and EXOC8. Interacts with ARHQ in a GTP-dependent manner. Interacts with RAB11FIP3. As to expression, abundant in the ventricular zone, the outer subventricular zone and the cortical plate of the fetal cortex.

It localises to the cytoplasm. The protein localises to the cytosol. It is found in the cell membrane. The protein resides in the midbody. Its subcellular location is the midbody ring. In terms of biological role, component of the exocyst complex involved in the docking of exocytic vesicles with fusion sites on the plasma membrane. In adipocytes, plays a crucial role in targeting SLC2A4 vesicle to the plasma membrane in response to insulin, perhaps directing the vesicle to the precise site of fusion. It is required for neuron survival and plays an essential role in cortical development. This is Exocyst complex component 7 (EXOC7) from Homo sapiens (Human).